A 196-amino-acid chain; its full sequence is MSDERYQQRQQKVKDRVDARVAQAQEERGIIIVFTGNGKGKTTAAFGTAARAVGHGKNVGVVQFIKGTWPNGERNLLEPHGVEFQVMATGFTWETQNREADTAACMAVWQHGKRMLADPLLDMVVLDELTYMVAYDYLPLEEVISALNARPGHQTVIITGRGCHRDILDLADTVSELRPVKHAFDAGVKAQMGIDY.

An ATP-binding site is contributed by 36–42 (GNGKGKT).

The protein belongs to the Cob(I)alamin adenosyltransferase family. Homodimer.

Its subcellular location is the cytoplasm. It carries out the reaction 2 cob(II)yrinate a,c diamide + reduced [electron-transfer flavoprotein] + 2 ATP = 2 adenosylcob(III)yrinate a,c-diamide + 2 triphosphate + oxidized [electron-transfer flavoprotein] + 3 H(+). The catalysed reaction is 2 cob(II)alamin + reduced [electron-transfer flavoprotein] + 2 ATP = 2 adenosylcob(III)alamin + 2 triphosphate + oxidized [electron-transfer flavoprotein] + 3 H(+). The protein operates within cofactor biosynthesis; adenosylcobalamin biosynthesis; adenosylcobalamin from cob(II)yrinate a,c-diamide: step 2/7. Required for both de novo synthesis of the corrin ring for the assimilation of exogenous corrinoids. Participates in the adenosylation of a variety of incomplete and complete corrinoids. The chain is Corrinoid adenosyltransferase CobA (btuR) from Salmonella typhimurium (strain LT2 / SGSC1412 / ATCC 700720).